The following is a 174-amino-acid chain: Ubiquinone biosynthesis accessory factor UbiT (174 aa).

An SCP2 domain is found at Leu-45–Asp-133.

This sequence belongs to the UbiT family.

It functions in the pathway cofactor biosynthesis; ubiquinone biosynthesis. In terms of biological role, required for O(2)-independent ubiquinone (coenzyme Q) biosynthesis. Likely functions as an accessory factor. The polypeptide is Ubiquinone biosynthesis accessory factor UbiT (Escherichia coli O157:H7).